The sequence spans 66 residues: Beta-toxin Cb3 (66 aa).

Positions 1-66 (KEGYIVNYYD…VWPLPNKTCL (66 aa)) constitute an LCN-type CS-alpha/beta domain. 4 disulfide bridges follow: cysteine 12-cysteine 65, cysteine 16-cysteine 41, cysteine 25-cysteine 46, and cysteine 29-cysteine 48.

It belongs to the long (4 C-C) scorpion toxin superfamily. Sodium channel inhibitor family. Beta subfamily. As to expression, expressed by the venom gland.

It is found in the secreted. In terms of biological role, beta toxins bind voltage-independently at site-4 of sodium channels (Nav) and reduces peak current and shifts the voltage of activation toward more negative potentials thereby affecting sodium channel activation and promoting spontaneous and repetitive firing. Has an inhibitory effect on voltage-gated sodium channels hNav1.1/SCN1A, hNav1.2/SCN2A, hNav1.4/SCN4A and hNav1.6/SCN8A. Reduces the peak current of hNav1.5/SCN5A but does not shift its voltage of activation. Also affects the inactivation processes of hNav1.1/SCN1A, hNav1.4/SCN4A, hNav1.5/SCN5A and hNav1.6/SCN8A. This toxin is active against mammals and lethal to mice. The sequence is that of Beta-toxin Cb3 from Centruroides baergi (Scorpion).